The chain runs to 264 residues: S-adenosylmethionine decarboxylase proenzyme (264 aa).

The active-site Schiff-base intermediate with substrate; via pyruvic acid is the S113. Pyruvic acid (Ser); by autocatalysis is present on S113. The Proton acceptor; for processing activity role is filled by H118. Catalysis depends on C141, which acts as the Proton donor; for catalytic activity.

It belongs to the prokaryotic AdoMetDC family. Type 2 subfamily. Heterooctamer of four alpha and four beta chains arranged as a tetramer of alpha/beta heterodimers. It depends on pyruvate as a cofactor. In terms of processing, is synthesized initially as an inactive proenzyme. Formation of the active enzyme involves a self-maturation process in which the active site pyruvoyl group is generated from an internal serine residue via an autocatalytic post-translational modification. Two non-identical subunits are generated from the proenzyme in this reaction, and the pyruvate is formed at the N-terminus of the alpha chain, which is derived from the carboxyl end of the proenzyme. The post-translation cleavage follows an unusual pathway, termed non-hydrolytic serinolysis, in which the side chain hydroxyl group of the serine supplies its oxygen atom to form the C-terminus of the beta chain, while the remainder of the serine residue undergoes an oxidative deamination to produce ammonia and the pyruvoyl group blocking the N-terminus of the alpha chain.

It catalyses the reaction S-adenosyl-L-methionine + H(+) = S-adenosyl 3-(methylsulfanyl)propylamine + CO2. It functions in the pathway amine and polyamine biosynthesis; S-adenosylmethioninamine biosynthesis; S-adenosylmethioninamine from S-adenosyl-L-methionine: step 1/1. Catalyzes the decarboxylation of S-adenosylmethionine to S-adenosylmethioninamine (dcAdoMet), the propylamine donor required for the synthesis of the polyamines spermine and spermidine from the diamine putrescine. This is S-adenosylmethionine decarboxylase proenzyme from Pseudomonas syringae pv. syringae (strain B728a).